The following is a 207-amino-acid chain: Transcriptional regulatory protein RcsA (207 aa).

Positions 131 to 196 (INLPTLSLSR…VIYHVVRLTD (66 aa)) constitute an HTH luxR-type domain. A DNA-binding region (H-T-H motif) is located at residues 155 to 174 (TIQISDRMNIKAKTVSSHKG).

Belongs to the RcsA family. Interacts with RcsB.

In terms of biological role, component of the Rcs signaling system, which controls transcription of numerous genes. Binds, with RcsB, to the RcsAB box to regulate expression of genes. The protein is Transcriptional regulatory protein RcsA of Salmonella typhi.